We begin with the raw amino-acid sequence, 292 residues long: GTP cyclohydrolase FolE2 (292 aa).

Belongs to the GTP cyclohydrolase IV family.

It catalyses the reaction GTP + H2O = 7,8-dihydroneopterin 3'-triphosphate + formate + H(+). The protein operates within cofactor biosynthesis; 7,8-dihydroneopterin triphosphate biosynthesis; 7,8-dihydroneopterin triphosphate from GTP: step 1/1. Converts GTP to 7,8-dihydroneopterin triphosphate. In Staphylococcus aureus (strain Mu50 / ATCC 700699), this protein is GTP cyclohydrolase FolE2.